Reading from the N-terminus, the 207-residue chain is Large ribosomal subunit protein uL4 (207 aa).

Over residues 43–52 (NKRQGTQSAK) the composition is skewed to polar residues. Positions 43-72 (NKRQGTQSAKTRAEVRGGGRKPWKQKGTGR) are disordered. Residues 60 to 71 (GGRKPWKQKGTG) are compositionally biased toward basic residues.

Belongs to the universal ribosomal protein uL4 family. In terms of assembly, part of the 50S ribosomal subunit.

One of the primary rRNA binding proteins, this protein initially binds near the 5'-end of the 23S rRNA. It is important during the early stages of 50S assembly. It makes multiple contacts with different domains of the 23S rRNA in the assembled 50S subunit and ribosome. In terms of biological role, forms part of the polypeptide exit tunnel. The chain is Large ribosomal subunit protein uL4 from Alkaliphilus metalliredigens (strain QYMF).